The following is a 341-amino-acid chain: MTDGILGKAATMEIPIHGNGEAGQLPEDDGLEQDLQQVMVSGPNLNETSIVSGGYGGSGDGLIPTGSGRHPSHSTSPSGPGDEVARGIAGEKFDIVKKWGINTYKCTKQLLSERFGRGSRTVDLELELQIELLRETKRKYESVLQLGRALTAHLYSLLQTQHALGDAFADLSQKSPELQEEFGYNAETQKLLCKNGETLLGAVNFFVSSINTLVTKTMEDTLMTVKQYEAARLEYDAYRTDLEELSLGPRDAGTRGRLESAQATFQTHRDKYEKLRGDVAIKLKFLEENKIKVMHKQLLLFHNAVSAYFAGNQKQLEQTLQQFNIKLRPPGAEKPSWLEEQ.

Residues 46-84 (NETSIVSGGYGGSGDGLIPTGSGRHPSHSTSPSGPGDEV) form a disordered region. Residues 65–81 (TGSGRHPSHSTSPSGPG) are compositionally biased toward low complexity. Serine 72 bears the Phosphoserine mark. An AH domain is found at 121–321 (TVDLELELQI…NQKQLEQTLQ (201 aa)).

In terms of assembly, forms homodimers or heterodimers with ARFIP1. Interacts with RAC1. Specifically binds to GTP-bound ARF1 and ARF6, but binds to RAC1.GTP and RAC1.GDP with similar affinities. Interacts with ARL1. Interacts (via N-terminus) with IKBKB and IKBKG; these interactions inhibit activation of NF-kappa-B.

Its subcellular location is the golgi apparatus. The protein localises to the trans-Golgi network membrane. In terms of biological role, plays a role in constitutive metalloproteinase (MMP) secretion from the trans Golgi network. May have important functions during vesicle biogenesis at certain cargo subdomains, which could be predominantly utilized by secreted MMPs, such as MMP7 and MMP2. Also involved in autophagy by regulating the starvation-dependent trafficking of ATG9A vesicles which deliver the phosphatidylinositol 4-kinase beta (PI4KB) to the autophagosome initiation site. Involved in phagophore growth during mitophagy by regulating ATG9A trafficking to mitochondria. In addition, plays a role in NF-kappa-B inhibition by interacting with IKBKB and IKBKG. This chain is Arfaptin-2, found in Mus musculus (Mouse).